We begin with the raw amino-acid sequence, 861 residues long: Bifunctional uridylyltransferase/uridylyl-removing enzyme (861 aa).

The segment at Met1–Arg321 is uridylyltransferase. A uridylyl-removing region spans residues Leu322–Thr678. Residues Val440–Leu562 enclose the HD domain. ACT domains lie at Glu679–Arg760 and Gln788–Tyr861.

Belongs to the GlnD family. It depends on Mg(2+) as a cofactor.

It carries out the reaction [protein-PII]-L-tyrosine + UTP = [protein-PII]-uridylyl-L-tyrosine + diphosphate. The catalysed reaction is [protein-PII]-uridylyl-L-tyrosine + H2O = [protein-PII]-L-tyrosine + UMP + H(+). With respect to regulation, uridylyltransferase (UTase) activity is inhibited by glutamine, while glutamine activates uridylyl-removing (UR) activity. In terms of biological role, modifies, by uridylylation and deuridylylation, the PII regulatory proteins (GlnB and homologs), in response to the nitrogen status of the cell that GlnD senses through the glutamine level. Under low glutamine levels, catalyzes the conversion of the PII proteins and UTP to PII-UMP and PPi, while under higher glutamine levels, GlnD hydrolyzes PII-UMP to PII and UMP (deuridylylation). Thus, controls uridylylation state and activity of the PII proteins, and plays an important role in the regulation of nitrogen assimilation and metabolism. The chain is Bifunctional uridylyltransferase/uridylyl-removing enzyme from Legionella pneumophila (strain Lens).